The sequence spans 542 residues: CTP synthase (542 aa).

Positions 1-265 (MTAFIFITGG…GRMLTELLKV (265 aa)) are amidoligase domain. S13 is a binding site for CTP. S13 serves as a coordination point for UTP. 14–19 (SVGKGI) provides a ligand contact to ATP. Y54 is an L-glutamine binding site. ATP is bound at residue D71. Residues D71 and E140 each coordinate Mg(2+). Residues 147–149 (DYE), 186–191 (KTKPLQ), and K222 contribute to the CTP site. UTP-binding positions include 186 to 191 (KTKPLQ) and K222. The region spanning 297–532 (YVKLRDAYIS…LKAALARKMG (236 aa)) is the Glutamine amidotransferase type-1 domain. G352 provides a ligand contact to L-glutamine. C379 acts as the Nucleophile; for glutamine hydrolysis in catalysis. Residues 380–383 (YGMQ), E403, and R460 each bind L-glutamine. Residues H505 and E507 contribute to the active site.

Belongs to the CTP synthase family. As to quaternary structure, homotetramer.

It carries out the reaction UTP + L-glutamine + ATP + H2O = CTP + L-glutamate + ADP + phosphate + 2 H(+). The enzyme catalyses L-glutamine + H2O = L-glutamate + NH4(+). The catalysed reaction is UTP + NH4(+) + ATP = CTP + ADP + phosphate + 2 H(+). It functions in the pathway pyrimidine metabolism; CTP biosynthesis via de novo pathway; CTP from UDP: step 2/2. Its activity is regulated as follows. Allosterically activated by GTP, when glutamine is the substrate; GTP has no effect on the reaction when ammonia is the substrate. The allosteric effector GTP functions by stabilizing the protein conformation that binds the tetrahedral intermediate(s) formed during glutamine hydrolysis. Inhibited by the product CTP, via allosteric rather than competitive inhibition. Catalyzes the ATP-dependent amination of UTP to CTP with either L-glutamine or ammonia as the source of nitrogen. Regulates intracellular CTP levels through interactions with the four ribonucleotide triphosphates. In Caldivirga maquilingensis (strain ATCC 700844 / DSM 13496 / JCM 10307 / IC-167), this protein is CTP synthase.